A 660-amino-acid chain; its full sequence is Secretin PulD (660 aa).

Positions 1 to 27 (MIIANVIRSFSLTLLIFAALLFRPAAA) are cleaved as a signal peptide. The interval 28–124 (EEFSASFKGT…VASDAAPGIG (97 aa)) is N0. Positions 126-190 (EVVTRVVPLT…TIVERVDNAG (65 aa)) are N1. The N2 stretch occupies residues 191–264 (DRSVVTVPLS…MIKQLDRQQA (74 aa)). The tract at residues 267–341 (GNTKVIYLKY…DLERVIAQLD (75 aa)) is N3. The tract at residues 346–596 (QVLVEAIIAE…LFIRPTVIRD (251 aa)) is secretin. The s domain stretch occupies residues 598-660 (DEYRQASSGQ…IDAFNLGGNL (63 aa)).

This sequence belongs to the bacterial secretin family. GSP D subfamily. As to quaternary structure, forms a cylindrical channel with 15 subunits.

Its subcellular location is the cell outer membrane. Its function is as follows. Involved in a type II secretion system (T2SS, formerly general secretion pathway, GSP) for the export of proteins. Required for the translocation of pullulanase. This subunit forms the outer membrane channel. This is Secretin PulD (pulD) from Klebsiella pneumoniae.